A 583-amino-acid polypeptide reads, in one-letter code: Phosphoglucomutase, cytoplasmic (583 aa).

A disordered region spans residues 1–20 (MATFKVSRVETKPYDGQKPG). Arginine 25 and serine 124 together coordinate alpha-D-glucose 1,6-bisphosphate. The Phosphoserine intermediate role is filled by serine 124. Positions 124, 300, 302, and 304 each coordinate Mg(2+). Position 124 is a phosphoserine (serine 124). Alpha-D-glucose 1,6-bisphosphate-binding residues include aspartate 304, arginine 305, threonine 368, glutamate 387, serine 389, and lysine 400.

This sequence belongs to the phosphohexose mutase family. In terms of assembly, monomer. Mg(2+) serves as cofactor.

Its subcellular location is the cytoplasm. It carries out the reaction alpha-D-glucose 1-phosphate = alpha-D-glucose 6-phosphate. It catalyses the reaction O-phospho-L-seryl-[protein] + alpha-D-glucose 1-phosphate = alpha-D-glucose 1,6-bisphosphate + L-seryl-[protein]. The catalysed reaction is alpha-D-glucose 1,6-bisphosphate + L-seryl-[protein] = O-phospho-L-seryl-[protein] + alpha-D-glucose 6-phosphate. Catalyzes the reversible isomerization of alpha-D-glucose 1-phosphate to alpha-D-glucose 6-phosphate. The mechanism proceeds via the intermediate compound alpha-D-glucose 1,6-bisphosphate. This enzyme participates in both the breakdown and synthesis of glucose. The chain is Phosphoglucomutase, cytoplasmic (PGM1) from Mesembryanthemum crystallinum (Common ice plant).